Consider the following 76-residue polypeptide: uncharacterized protein (76 aa).

The chain crosses the membrane as a helical span at residues 40–60 (IVLNLVVLVGVVPLTWMFLGQ).

The protein resides in the membrane. This is an uncharacterized protein from Dictyostelium discoideum (Social amoeba).